Consider the following 1021-residue polypeptide: Caspase recruitment domain-containing protein 10 (1021 aa).

Residues 1 to 24 (MQGRADAGEADEEAGAGSGSEAEE) form a disordered region. The residue at position 18 (Ser18) is a Phosphoserine. The region spanning 23 to 115 (EEDALWERIE…EHFTLLTGQE (93 aa)) is the CARD domain. Residues 138–450 (TEVRRLREAR…LEAQLQRTQG (313 aa)) adopt a coiled-coil conformation. Disordered regions lie at residues 475–544 (EFPS…MSDI), 597–616 (SPPA…PGLG), and 790–809 (LVRP…QLPA). Composition is skewed to basic and acidic residues over residues 495–508 (HTSE…KEIN) and 525–535 (RQREEDPEPPK).

In terms of assembly, CARD10 and BCL10 bind to each other by CARD-CARD interaction. They both participate in a complex with MALT1, where MALT1 binds to BCL10. Interacts with TMEM43; this interaction is essential for EGFR-mediated NF-kappa-B activation. In terms of tissue distribution, highly expressed in kidney, heart followed by brain, lung, liver, skeletal muscle and testis.

In terms of biological role, scaffold protein that plays an important role in mediating the activation of NF-kappa-B via BCL10 or EGFR. The polypeptide is Caspase recruitment domain-containing protein 10 (Card10) (Mus musculus (Mouse)).